A 305-amino-acid chain; its full sequence is Coenzyme PQQ synthesis protein B (305 aa).

Belongs to the PqqB family.

It participates in cofactor biosynthesis; pyrroloquinoline quinone biosynthesis. In terms of biological role, may be involved in the transport of PQQ or its precursor to the periplasm. The polypeptide is Coenzyme PQQ synthesis protein B (Cupriavidus taiwanensis (strain DSM 17343 / BCRC 17206 / CCUG 44338 / CIP 107171 / LMG 19424 / R1) (Ralstonia taiwanensis (strain LMG 19424))).